The primary structure comprises 337 residues: Heme A synthase (337 aa).

5 consecutive transmembrane segments (helical) span residues 6–26 (ITKWLCISCIMVIATLVIGGI), 87–107 (FIHRLLGRITALIYIVPLIYF), 119–139 (LPYIIALLLFCVQGFIGWYMV), 154–174 (LAFHLIIAVIIYHILFYQLIK), and 192–212 (LIFSGIAITVVYVQIFLGALV). Histidine 256 is a binding site for heme. Helical transmembrane passes span 258–278 (LVGYSVFLVVVVLISCLLKIE), 285–305 (IAYFLMIALFMQVSTGILTLL), and 308–328 (VPIIIASIHQLFAIILLSIII). Heme is bound at residue histidine 316.

This sequence belongs to the COX15/CtaA family. Type 2 subfamily. As to quaternary structure, interacts with CtaB. Heme b is required as a cofactor.

The protein resides in the cell membrane. It catalyses the reaction Fe(II)-heme o + 2 A + H2O = Fe(II)-heme a + 2 AH2. It functions in the pathway porphyrin-containing compound metabolism; heme A biosynthesis; heme A from heme O: step 1/1. In terms of biological role, catalyzes the conversion of heme O to heme A by two successive hydroxylations of the methyl group at C8. The first hydroxylation forms heme I, the second hydroxylation results in an unstable dihydroxymethyl group, which spontaneously dehydrates, resulting in the formyl group of heme A. This is Heme A synthase from Rickettsia conorii (strain ATCC VR-613 / Malish 7).